The sequence spans 153 residues: 3-hydroxyacyl-[acyl-carrier-protein] dehydratase FabZ (153 aa).

Residue H47 is part of the active site.

This sequence belongs to the thioester dehydratase family. FabZ subfamily.

Its subcellular location is the cytoplasm. The catalysed reaction is a (3R)-hydroxyacyl-[ACP] = a (2E)-enoyl-[ACP] + H2O. Its function is as follows. Involved in unsaturated fatty acids biosynthesis. Catalyzes the dehydration of short chain beta-hydroxyacyl-ACPs and long chain saturated and unsaturated beta-hydroxyacyl-ACPs. This is 3-hydroxyacyl-[acyl-carrier-protein] dehydratase FabZ from Myxococcus xanthus (strain DK1622).